Consider the following 79-residue polypeptide: Sulfur carrier protein TusA (79 aa).

C17 acts as the Cysteine persulfide intermediate in catalysis.

Belongs to the sulfur carrier protein TusA family.

The protein resides in the cytoplasm. Functionally, sulfur carrier protein which probably makes part of a sulfur-relay system. The polypeptide is Sulfur carrier protein TusA (Haemophilus influenzae (strain 86-028NP)).